The sequence spans 259 residues: L-arginine-binding protein (259 aa).

A signal peptide spans 1-21 (MKKLALLGALALSVLSLPTFA).

The protein belongs to the bacterial solute-binding protein 3 family.

It is found in the periplasm. Binds L-arginine with high affinity. Shows no measurable affinity for L-ornithine. This is L-arginine-binding protein from Pseudomonas aeruginosa (strain ATCC 15692 / DSM 22644 / CIP 104116 / JCM 14847 / LMG 12228 / 1C / PRS 101 / PAO1).